Here is a 64-residue protein sequence, read N- to C-terminus: Large ribosomal subunit protein bL35 (64 aa).

It belongs to the bacterial ribosomal protein bL35 family.

The protein is Large ribosomal subunit protein bL35 of Vibrio parahaemolyticus serotype O3:K6 (strain RIMD 2210633).